The chain runs to 260 residues: Shikimate dehydrogenase (NADP(+)) (260 aa).

Shikimate-binding positions include 14–16 and Thr60; that span reads SAS. Lys64 functions as the Proton acceptor in the catalytic mechanism. Positions 85 and 100 each coordinate shikimate. Residues 121-125, 145-150, and Phe201 contribute to the NADP(+) site; these read GAGGA and NRTYER. Tyr203 is a shikimate binding site. Gly225 provides a ligand contact to NADP(+).

It belongs to the shikimate dehydrogenase family. As to quaternary structure, homodimer.

It carries out the reaction shikimate + NADP(+) = 3-dehydroshikimate + NADPH + H(+). It functions in the pathway metabolic intermediate biosynthesis; chorismate biosynthesis; chorismate from D-erythrose 4-phosphate and phosphoenolpyruvate: step 4/7. In terms of biological role, involved in the biosynthesis of the chorismate, which leads to the biosynthesis of aromatic amino acids. Catalyzes the reversible NADPH linked reduction of 3-dehydroshikimate (DHSA) to yield shikimate (SA). In Pyrobaculum neutrophilum (strain DSM 2338 / JCM 9278 / NBRC 100436 / V24Sta) (Thermoproteus neutrophilus), this protein is Shikimate dehydrogenase (NADP(+)).